The sequence spans 325 residues: Elongation factor P--(R)-beta-lysine ligase (325 aa).

Ser76–Glu78 lines the substrate pocket. Residues Arg100–Glu102 and Asn109 each bind ATP. Substrate is bound at residue Tyr118. ATP is bound at residue Glu244–Leu245. Glu251 lines the substrate pocket. Gly300 is an ATP binding site.

Belongs to the class-II aminoacyl-tRNA synthetase family. EpmA subfamily. Homodimer.

The enzyme catalyses D-beta-lysine + L-lysyl-[protein] + ATP = N(6)-((3R)-3,6-diaminohexanoyl)-L-lysyl-[protein] + AMP + diphosphate + H(+). With EpmB is involved in the beta-lysylation step of the post-translational modification of translation elongation factor P (EF-P) on 'Lys-34'. Catalyzes the ATP-dependent activation of (R)-beta-lysine produced by EpmB, forming a lysyl-adenylate, from which the beta-lysyl moiety is then transferred to the epsilon-amino group of EF-P 'Lys-34'. This Salmonella paratyphi A (strain ATCC 9150 / SARB42) protein is Elongation factor P--(R)-beta-lysine ligase.